The following is a 310-amino-acid chain: MEKLAASTVTDLACVTAINSSPPPLSPISEQSFNNKHQEEFAASFASLYNSIFSPESLSPSPPSSSSPPSRVDTTTEHRLLQAKLILEYDELNEHYELCLNRLQSLMTELDSLRHENDSLRFENSDLLKLIRISTSSSSSVSPPAPIHNRQFRHQISDSRSAKRNNQERNSLPKSISVRSQGYLKINHGFEASDLQTSQLSSNSVSSSQKVCVVQTKGEREALELEVYRQGMMKTELCNKWQETGACCYGDNCQFAHGIDELRPVIRHPRYKTEVCRMMVTGAMCPYGHRCHFRHSLTDQERMMMMMLTR.

The tract at residues 56-75 (ESLSPSPPSSSSPPSRVDTT) is disordered. A coiled-coil region spans residues 84–129 (KLILEYDELNEHYELCLNRLQSLMTELDSLRHENDSLRFENSDLLK). Residues 155–167 (QISDSRSAKRNNQ) show a composition bias toward basic and acidic residues. Positions 155 to 174 (QISDSRSAKRNNQERNSLPK) are disordered. 2 C3H1-type zinc fingers span residues 232 to 260 (MMKTELCNKWQETGACCYGDNCQFAHGID) and 270 to 298 (RYKTEVCRMMVTGAMCPYGHRCHFRHSLT).

As to expression, highly expressed in secondary cell wall-forming tissues and the xylem cells of roots. Expressed predominantly in inflorescence stems, flowers and siliques. Highly expressed in the basal portion of stems, where cells are undergoing secondary cell wall thickening.

Its function is as follows. Functions probably as a transcriptional factor that activates genes involved in secondary cell wall biosynthesis. May play a role in both transcriptional and post-transcriptional regulation. Binds to ssDNA, dsDNA, and ribohomopolymers in vitro. Maybe involved in post-transcriptional regulation of its target genes. Targets RNA of a polygalacturonase, a well-known cell wall modifying gene. Functions redudantly with C3H15 to regulate secondary cell wall formation. C3H14 and C3H15 have overlapping roles in the regulation of secondary cell wall formation and anther development. C3H14 may contribute more to secondary cell wall thickening while C3H15 could be more important in anther development. May regulate at both the transcriptional and post-transcriptional levels the expression of many genes involved in various biological processes, particularly those associated with cell wall metabolism and pollen development. This is Zinc finger CCCH domain-containing protein 14 from Arabidopsis thaliana (Mouse-ear cress).